The following is a 440-amino-acid chain: C4-dicarboxylate transport protein (440 aa).

8 helical membrane-spanning segments follow: residues 8–28, 40–60, 74–94, 147–167, 187–207, 221–241, 288–308, and 354–374; these read LYLQ…LFPA, FIKL…VTGI, LKGL…GLVV, GDIL…AALK, IVGF…AFTV, LIAC…GLVL, VVGL…SIYL, and AATL…LLGV. A disordered region spans residues 419-440; the sequence is DEVEPANDPEPPAMAAGLGLHG.

The protein belongs to the dicarboxylate/amino acid:cation symporter (DAACS) (TC 2.A.23) family.

It localises to the cell inner membrane. Responsible for the transport of dicarboxylates such as succinate, fumarate, and malate from the periplasm across the membrane. The sequence is that of C4-dicarboxylate transport protein from Anaeromyxobacter dehalogenans (strain 2CP-C).